The following is a 231-amino-acid chain: Phosphoglycolate phosphatase, plasmid (231 aa).

Catalysis depends on aspartate 14, which acts as the Nucleophile. 3 residues coordinate Mg(2+): aspartate 14, aspartate 16, and aspartate 175.

The protein belongs to the HAD-like hydrolase superfamily. CbbY/CbbZ/Gph/YieH family. In terms of assembly, homotrimer. Requires Mg(2+) as cofactor.

It catalyses the reaction 2-phosphoglycolate + H2O = glycolate + phosphate. Its pathway is organic acid metabolism; glycolate biosynthesis; glycolate from 2-phosphoglycolate: step 1/1. In terms of biological role, specifically catalyzes the dephosphorylation of 2-phosphoglycolate. Is involved in the dissimilation of the intracellular 2-phosphoglycolate formed during the DNA repair of 3'-phosphoglycolate ends, a major class of DNA lesions induced by oxidative stress. This chain is Phosphoglycolate phosphatase, plasmid (cbbZP), found in Cupriavidus necator (strain ATCC 17699 / DSM 428 / KCTC 22496 / NCIMB 10442 / H16 / Stanier 337) (Ralstonia eutropha).